The primary structure comprises 866 residues: DNA replication licensing factor MCM4 (866 aa).

3 disordered regions span residues 1-67, 81-107, and 124-145; these read MSSP…TSPA, SPLN…TPLR, and GGGS…PVSE. 2 stretches are compositionally biased toward polar residues: residues 47 to 63 and 81 to 93; these read DNIS…SLPA and SPLN…SMGS. 2 positions are modified to phosphoserine: S55 and S81. Position 87 is a phosphothreonine (T87). One can recognise an MCM domain in the interval 460–669; sequence IYDRLARAIA…FDKRLASHLV (210 aa). 512 to 519 lines the ATP pocket; that stretch reads GDPGTSKS. The Arginine finger signature appears at 644 to 647; the sequence is SRFD.

Belongs to the MCM family. As to quaternary structure, component of the Mcm2-7 complex. The complex forms a toroidal hexameric ring with the proposed subunit order Mcm2-Mcm6-Mcm4-Mcm7-Mcm3-Mcm5. Phosphorylated by the catalytic component of the Dbf4-dependent kinase (DDK) complex Cdc7.

The protein localises to the nucleus. The catalysed reaction is ATP + H2O = ADP + phosphate + H(+). In terms of biological role, acts as a component of the Mcm2-7 complex (Mcm complex) which is the putative replicative helicase essential for 'once per cell cycle' DNA replication initiation and elongation in eukaryotic cells. The active ATPase sites in the Mcm2-7 ring are formed through the interaction surfaces of two neighboring subunits such that a critical structure of a conserved arginine finger motif is provided in trans relative to the ATP-binding site of the Walker A box of the adjacent subunit. The six ATPase active sites, however, are likely to contribute differentially to the complex helicase activity. Required for DNA replication and cell proliferation. Essential role in mitotic DNA replication but not in endoreplication. This is DNA replication licensing factor MCM4 (dpa) from Drosophila melanogaster (Fruit fly).